We begin with the raw amino-acid sequence, 516 residues long: Radial spoke head protein 3 homolog A (516 aa).

3 disordered regions span residues 1-45, 120-139, and 190-233; these read MAAT…GNPA, STLN…AEAS, and PTGQ…PVEG. A compositionally biased stretch (basic residues) spans 12 to 25; it reads AKKRPLHQRARRPA. Residues 120-129 show a composition bias toward polar residues; the sequence is STLNQASAMT. A compositionally biased stretch (basic residues) spans 208 to 217; it reads QARRRALARK. The segment covering 218-233 has biased composition (basic and acidic residues); the sequence is RAQEQLKPRTPEPVEG. A Phosphothreonine; by MAPK1 modification is found at threonine 270. Residues 333–369 are a coiled coil; it reads YEEIRNVELAEVQRLEEQERRHREEKERRKKQQWEIV. The segment at 459–516 is disordered; the sequence is EAMPPGQKTNVINGPNTVTDPSVTTLHTQKPVLDRVSSQPAPSQERKPVEEGGHLMAE. The span at 465-486 shows a compositional bias: polar residues; it reads QKTNVINGPNTVTDPSVTTLHT. Basic and acidic residues predominate over residues 502–516; it reads QERKPVEEGGHLMAE.

It belongs to the flagellar radial spoke RSP3 family. As to quaternary structure, may be a component of axonemal radial spokes. Interacts with IQUB. Interacts with phosphorylated MAPK1. Interacts with MEK1. Interacts with PKA regulatory subunits PRKAR1A and PRKAR1B. Interacts with RSPH1. Interacts with RSPH4A. Interacts with RSPH6A. Interacts with RSPH9. Interacts with CFAP61. Interacts with LRRC23.

The protein resides in the cytoplasm. The protein localises to the cytoskeleton. It localises to the cilium axoneme. It is found in the flagellum axoneme. Functionally, may function as part of axonemal radial spoke complexes that play an important part in the motility of sperm and cilia. Functions as a protein kinase A-anchoring protein that scaffolds the cAMP-dependent protein kinase holoenzyme. May serve as a point of convergence for MAPK and PKA signaling in cilia. In Mus musculus (Mouse), this protein is Radial spoke head protein 3 homolog A (Rsph3a).